Consider the following 221-residue polypeptide: MKAVCLLSGGMDSSTLAYVAKDMGYHIHALHLNYGQRTEKKELQSATAIARSLSAEEFIPLDLGYFKAFGKSSLTDPAIDVDVFDENRPELPNTYVPFRNANLLSIATSFAESRDADAIFIGVQALDYSGYPDCRPAFIQAFQQVMDLGTADGTHIDLLTPFIGLTKTDILRKGLDLGVPYEHTWSCYQNEEKACGVCGSCHFRQKAFAELGLSDPIPYEE.

7 to 17 is a binding site for ATP; the sequence is LSGGMDSSTLA. Positions 187, 195, 198, and 201 each coordinate Zn(2+).

This sequence belongs to the QueC family. Requires Zn(2+) as cofactor.

The catalysed reaction is 7-carboxy-7-deazaguanine + NH4(+) + ATP = 7-cyano-7-deazaguanine + ADP + phosphate + H2O + H(+). It participates in purine metabolism; 7-cyano-7-deazaguanine biosynthesis. Functionally, catalyzes the ATP-dependent conversion of 7-carboxy-7-deazaguanine (CDG) to 7-cyano-7-deazaguanine (preQ(0)). The sequence is that of 7-cyano-7-deazaguanine synthase from Methanosphaerula palustris (strain ATCC BAA-1556 / DSM 19958 / E1-9c).